A 99-amino-acid chain; its full sequence is Transmembrane protein 14A (99 aa).

Helical transmembrane passes span M1–K21, G24–Y44, and P79–L99.

This sequence belongs to the TMEM14 family.

It is found in the mitochondrion membrane. It localises to the endoplasmic reticulum membrane. In terms of biological role, inhibits apoptosis via negative regulation of the mitochondrial outer membrane permeabilization involved in apoptotic signaling pathway. This Sus scrofa (Pig) protein is Transmembrane protein 14A (TMEM14A).